A 269-amino-acid polypeptide reads, in one-letter code: HTH-type transcriptional activator ArnR1 (269 aa).

Residues 1-217 (MSSMNKRVFD…LLKLTGSYRY (217 aa)) lie on the Cytoplasmic side of the membrane. The H-T-H motif DNA-binding region spans 42–65 (TTEISQTINTSRKSIIDAIRKLVD). The helical transmembrane segment at 218–238 (EIALTKVMLFNVISIPVLMYL) threads the bilayer. Topologically, residues 239 to 241 (KDQ) are extracellular. Residues 242-262 (LGILEAIWLYVIILLPLLSIF) traverse the membrane as a helical segment. Residues 263-269 (AEIFNRI) are Cytoplasmic-facing.

The protein resides in the cell membrane. Involved in regulation of archaellar gene expression. May activate flaB transcription upon nutrient starvation by acting on the flaB promoter. This Sulfolobus acidocaldarius (strain ATCC 33909 / DSM 639 / JCM 8929 / NBRC 15157 / NCIMB 11770) protein is HTH-type transcriptional activator ArnR1.